The sequence spans 983 residues: Probable beta-galactosidase C (983 aa).

The signal sequence occupies residues 1-23; sequence MRIFSFLFLLLLGILTGQGLVSG. Positions 82, 127, 128, 129, and 187 each coordinate substrate. The active-site Proton donor is glutamate 188. Asparagine 197 is a glycosylation site (N-linked (GlcNAc...) asparagine). Residue tyrosine 251 participates in substrate binding. A disulfide bridge links cysteine 257 with cysteine 304. N-linked (GlcNAc...) asparagine glycosylation is present at asparagine 276. Residue glutamate 287 is the Nucleophile of the active site. Substrate is bound at residue tyrosine 353. N-linked (GlcNAc...) asparagine glycosylation is found at asparagine 391, asparagine 434, asparagine 466, asparagine 516, asparagine 601, asparagine 676, asparagine 714, asparagine 719, asparagine 758, and asparagine 804.

Belongs to the glycosyl hydrolase 35 family.

The protein resides in the secreted. It carries out the reaction Hydrolysis of terminal non-reducing beta-D-galactose residues in beta-D-galactosides.. In terms of biological role, cleaves beta-linked terminal galactosyl residues from gangliosides, glycoproteins, and glycosaminoglycans. The chain is Probable beta-galactosidase C (lacC) from Aspergillus fumigatus (strain CBS 144.89 / FGSC A1163 / CEA10) (Neosartorya fumigata).